We begin with the raw amino-acid sequence, 115 residues long: U31-theraphotoxin-Cg1b (115 aa).

The first 18 residues, 1–18 (MKLCVIIIASLMVASVSG), serve as a signal peptide directing secretion. Positions 19 to 51 (RLRKIKGTELDKKMLLEKLGHGMDIRFEETPRE) are excised as a propeptide. 4 disulfide bridges follow: C52–C67, C60–C73, C64–C113, and C66–C86.

This sequence belongs to the neurotoxin 03 (Tx2) family. 02 subfamily. Expressed by the venom gland.

It localises to the secreted. Probable ion channel inhibitor. In Chilobrachys guangxiensis (Chinese earth tiger tarantula), this protein is U31-theraphotoxin-Cg1b.